We begin with the raw amino-acid sequence, 121 residues long: Putative RNase MJ0127 (121 aa).

Catalysis depends on residues Arg76 and His81. The RX(4)HXY motif signature appears at 76–83; it reads RDKLIHHY. Tyr83 is modified (O-di-AMP-tyrosine).

Belongs to the HepT RNase toxin family. Homodimer, probably forms a complex with cognate antitoxin MJ0128. In terms of processing, modified by cognate antitoxin MJ0128; probably at least 2 successive AMPylation events occur on Tyr-83.

Probable toxic component of a putative type VII toxin-antitoxin (TA) system, probably an RNase. Probably neutralized by cognate antitoxin MJ0128. Neutralization may be due to AMPylation by MJ0128. The sequence is that of Putative RNase MJ0127 from Methanocaldococcus jannaschii (strain ATCC 43067 / DSM 2661 / JAL-1 / JCM 10045 / NBRC 100440) (Methanococcus jannaschii).